A 578-amino-acid chain; its full sequence is MNILELSEQEVVRRNSLEQLRNLGIDPYPAAEYTVNAYSAEIKRNFNGDENVAKRQVSIAGRIMSRRIMGKATFMELQDAEGRIQIYITRDDICPGEDKEFYNTVVKKCTDIGDFIGVKGYVFRTQMGEISVHVQEMTFLSKAIRPLPVVKEKDGEVFDGFTDPEQRYRQRYVDLVVNSHVKDIFLKRTMVFNSMRSFFNECGYIEVDTPVLQSIPGGAAARPFITHHNALDIPLYLRIANELYLKRLIVGGFDGVYEFSRNFRNEGMDRTHNPEFTAMEIYVAYKDYNWMMNFTEQMLERICMDVLGTTQMKVGGKLIDFKAPYKRVTMIEAIHEHTGIDISGMNEAELRQVCDKLGVEHNETMGKGKLIDEIFGEKCEKNYIQPTFITDYPKEMSPLTKEHRTNPELTERFELMVNGKELANAYSELNDPIDQRERFEEQLKLSEKGDDEAMYIDNDFIRALEYGMPPTSGMGIGMDRLVMLLTGQESIQEVLLFPQMKPEKVAPRDTKEKFAVCGVPEEWVPVLHKAGYLTVQSMREDKPGKVMQQLMDINKKYKLGLAGLNLETVSAWQEAPYE.

Positions 414 and 421 each coordinate Mg(2+).

This sequence belongs to the class-II aminoacyl-tRNA synthetase family. In terms of assembly, homodimer. Mg(2+) is required as a cofactor.

The protein localises to the cytoplasm. The catalysed reaction is tRNA(Lys) + L-lysine + ATP = L-lysyl-tRNA(Lys) + AMP + diphosphate. The chain is Lysine--tRNA ligase from Porphyromonas gingivalis (strain ATCC BAA-308 / W83).